The sequence spans 180 residues: Cytokinin-beta-glucosidase 3 (180 aa).

Functionally, hydrolyzes cytokinin glucosides thus liberating free cytokinins. This is Cytokinin-beta-glucosidase 3 (ROLC3) from Panax ginseng (Korean ginseng).